We begin with the raw amino-acid sequence, 401 residues long: uncharacterized protein (401 aa).

Lysine 242 carries the N6-(pyridoxal phosphate)lysine modification.

This sequence belongs to the class-I pyridoxal-phosphate-dependent aminotransferase family. In terms of assembly, homodimer. It depends on pyridoxal 5'-phosphate as a cofactor.

Its subcellular location is the cytoplasm. This is an uncharacterized protein from Saccharolobus solfataricus (strain ATCC 35092 / DSM 1617 / JCM 11322 / P2) (Sulfolobus solfataricus).